The primary structure comprises 88 residues: UPF0250 protein Sfri_0694 (88 aa).

The protein belongs to the UPF0250 family.

The chain is UPF0250 protein Sfri_0694 from Shewanella frigidimarina (strain NCIMB 400).